The primary structure comprises 212 residues: Large ribosomal subunit protein bL25 (212 aa).

The disordered stretch occupies residues 179–212 (EPEEEELPEDDEAAAEGEDAAAGEEAEAPAESED).

The protein belongs to the bacterial ribosomal protein bL25 family. CTC subfamily. In terms of assembly, part of the 50S ribosomal subunit; part of the 5S rRNA/L5/L18/L25 subcomplex. Contacts the 5S rRNA. Binds to the 5S rRNA independently of L5 and L18.

Functionally, this is one of the proteins that binds to the 5S RNA in the ribosome where it forms part of the central protuberance. The chain is Large ribosomal subunit protein bL25 from Corynebacterium urealyticum (strain ATCC 43042 / DSM 7109).